The following is a 191-amino-acid chain: Ribonuclease MC (191 aa).

Gln-9 contacts RNA. Cys-15 and Cys-23 are joined by a disulfide. Residues His-34, Asn-72–Val-73, Arg-75, Phe-81, His-84–Glu-85, and Lys-88–His-89 contribute to the RNA site. His-34 acts as the Proton donor in catalysis. Disulfide bonds link Cys-48/Cys-92, Cys-152/Cys-185, and Cys-169/Cys-180. Glu-85 is a catalytic residue. His-89 serves as the catalytic Proton acceptor.

This sequence belongs to the RNase T2 family.

The enzyme catalyses a ribonucleotidyl-ribonucleotide-RNA + H2O = a 3'-end 3'-phospho-ribonucleotide-RNA + a 5'-end dephospho-ribonucleoside-RNA + H(+). Functionally, ribonuclease cleaving preferentially the 5'-side of uridine. The sequence is that of Ribonuclease MC from Momordica charantia (Bitter gourd).